A 173-amino-acid chain; its full sequence is Crossover junction endodeoxyribonuclease RuvC (173 aa).

Catalysis depends on residues D8, E67, and D139. Mg(2+) is bound by residues D8, E67, and D139.

It belongs to the RuvC family. As to quaternary structure, homodimer which binds Holliday junction (HJ) DNA. The HJ becomes 2-fold symmetrical on binding to RuvC with unstacked arms; it has a different conformation from HJ DNA in complex with RuvA. In the full resolvosome a probable DNA-RuvA(4)-RuvB(12)-RuvC(2) complex forms which resolves the HJ. Mg(2+) serves as cofactor.

It localises to the cytoplasm. The catalysed reaction is Endonucleolytic cleavage at a junction such as a reciprocal single-stranded crossover between two homologous DNA duplexes (Holliday junction).. Its function is as follows. The RuvA-RuvB-RuvC complex processes Holliday junction (HJ) DNA during genetic recombination and DNA repair. Endonuclease that resolves HJ intermediates. Cleaves cruciform DNA by making single-stranded nicks across the HJ at symmetrical positions within the homologous arms, yielding a 5'-phosphate and a 3'-hydroxyl group; requires a central core of homology in the junction. The consensus cleavage sequence is 5'-(A/T)TT(C/G)-3'. Cleavage occurs on the 3'-side of the TT dinucleotide at the point of strand exchange. HJ branch migration catalyzed by RuvA-RuvB allows RuvC to scan DNA until it finds its consensus sequence, where it cleaves and resolves the cruciform DNA. This chain is Crossover junction endodeoxyribonuclease RuvC, found in Cronobacter sakazakii (strain ATCC BAA-894) (Enterobacter sakazakii).